Consider the following 38-residue polypeptide: Photosystem I reaction center subunit VIII (38 aa).

A helical membrane pass occupies residues 12–32 (WILIPIIGWLMPAVVMGLLFL).

This sequence belongs to the PsaI family.

It is found in the cellular thylakoid membrane. Its function is as follows. May help in the organization of the PsaL subunit. The protein is Photosystem I reaction center subunit VIII of Gloeothece citriformis (strain PCC 7424) (Cyanothece sp. (strain PCC 7424)).